Here is a 93-residue protein sequence, read N- to C-terminus: Chromosomal protein MC1 (93 aa).

Positions 1 to 43 (SNTRNFVLRDEEGNEHGVFTGKQPRQAALKAANRGDGTKSNPD) are disordered.

Functionally, protects DNA against thermal denaturation and modulates transcription. This is Chromosomal protein MC1 from Methanosarcina barkeri.